A 431-amino-acid polypeptide reads, in one-letter code: Glutamate-1-semialdehyde 2,1-aminomutase (431 aa).

Lys269 carries the N6-(pyridoxal phosphate)lysine modification.

The protein belongs to the class-III pyridoxal-phosphate-dependent aminotransferase family. HemL subfamily. As to quaternary structure, homodimer. It depends on pyridoxal 5'-phosphate as a cofactor.

The protein localises to the cytoplasm. It catalyses the reaction (S)-4-amino-5-oxopentanoate = 5-aminolevulinate. Its pathway is porphyrin-containing compound metabolism; protoporphyrin-IX biosynthesis; 5-aminolevulinate from L-glutamyl-tRNA(Glu): step 2/2. This chain is Glutamate-1-semialdehyde 2,1-aminomutase, found in Francisella tularensis subsp. holarctica (strain LVS).